A 668-amino-acid polypeptide reads, in one-letter code: DNA ligase (668 aa).

Residues 34–38 (DAEYD), 83–84 (SL), and Glu-113 each bind NAD(+). Residue Lys-115 is the N6-AMP-lysine intermediate of the active site. Positions 136, 170, 286, and 310 each coordinate NAD(+). Zn(2+)-binding residues include Cys-404, Cys-407, Cys-422, and Cys-427. The BRCT domain maps to 590–668 (DSDSYFAGKT…EEQLMGELKK (79 aa)).

This sequence belongs to the NAD-dependent DNA ligase family. LigA subfamily. Mg(2+) is required as a cofactor. It depends on Mn(2+) as a cofactor.

The catalysed reaction is NAD(+) + (deoxyribonucleotide)n-3'-hydroxyl + 5'-phospho-(deoxyribonucleotide)m = (deoxyribonucleotide)n+m + AMP + beta-nicotinamide D-nucleotide.. In terms of biological role, DNA ligase that catalyzes the formation of phosphodiester linkages between 5'-phosphoryl and 3'-hydroxyl groups in double-stranded DNA using NAD as a coenzyme and as the energy source for the reaction. It is essential for DNA replication and repair of damaged DNA. The chain is DNA ligase from Bacillus subtilis (strain 168).